Consider the following 1124-residue polypeptide: Zinc finger E-box-binding homeobox 1 (1124 aa).

Disordered regions lie at residues 1 to 124 (MADG…NHDP) and 142 to 163 (APEE…NGTP). A compositionally biased stretch (low complexity) spans 18-30 (NNVTNYNTVVETN). Phosphoserine is present on residues S31 and S33. Acidic residues predominate over residues 44–62 (EESVTDAADCEGVPEDDLP). The segment covering 72-91 (SSEREGNAKNCWEDDRKEGQ) has biased composition (basic and acidic residues). Residues 170-193 (LTCPYCDRGYKRFTSLKEHIKYRH) form a C2H2-type 1 zinc finger. Residues K186 and K195 each participate in a glycyl lysine isopeptide (Lys-Gly) (interchain with G-Cter in SUMO2) cross-link. 2 C2H2-type zinc fingers span residues 200-222 (FSCS…MTSH) and 240-262 (FKCT…LRIH). The C2H2-type 4; atypical zinc finger occupies 268–292 (YECPNCKKRFSHSGSYSSHISSKKC). The tract at residues 304–327 (TGLKTSQCSSPSLSASPGSPTRPQ) is disordered. A Glycyl lysine isopeptide (Lys-Gly) (interchain with G-Cter in SUMO2) cross-link involves residue K307. The segment covering 309–322 (SQCSSPSLSASPGS) has biased composition (low complexity). 2 positions are modified to phosphoserine: S313 and S322. Glycyl lysine isopeptide (Lys-Gly) (interchain with G-Cter in SUMO2) cross-links involve residues K331 and K335. Residue K347 forms a Glycyl lysine isopeptide (Lys-Gly) (interchain with G-Cter in SUMO); alternate linkage. K347 is covalently cross-linked (Glycyl lysine isopeptide (Lys-Gly) (interchain with G-Cter in SUMO2); alternate). Residues K439, K493, K504, K515, K548, and K553 each participate in a glycyl lysine isopeptide (Lys-Gly) (interchain with G-Cter in SUMO2) cross-link. Disordered regions lie at residues 551 to 586 (DLKQ…SPSQ) and 636 to 714 (QISV…SSSR). Residues 581-640 (NLSPSQPPLKNLLSLLKAYYALNAQPSAEELSKIADSVNLPLDVVKKWFEKMQAGQISVQ) constitute a DNA-binding region (homeobox; atypical). A phosphoserine mark is found at S642, S679, S686, S693, and S700. Polar residues predominate over residues 656–687 (AKNNDQPQSANANEPQDSTVNLQSPLKMTNSP). Residues 692 to 714 (GSTTNGSRSSTPSPSPLNLSSSR) are compositionally biased toward low complexity. A Phosphothreonine modification is found at T702. At S704 the chain carries Phosphoserine. K774 participates in a covalent cross-link: Glycyl lysine isopeptide (Lys-Gly) (interchain with G-Cter in SUMO); alternate. Residue K774 forms a Glycyl lysine isopeptide (Lys-Gly) (interchain with G-Cter in SUMO2); alternate linkage. A disordered region spans residues 856-898 (PPLKVIQPNGNQDERQDTSSEGVSNVEDQNDSDSTPPKKKMRK). Polar residues predominate over residues 874-890 (SSEGVSNVEDQNDSDST). 2 consecutive C2H2-type zinc fingers follow at residues 904–926 (YACD…KYEH) and 932–954 (HECG…MRLH). Residues 960-981 (YQCDKCGKRFSHSGSYSQHMNH) form a C2H2-type 7; atypical zinc finger. Residues 989-1124 (EAEERDSTEQ…QVSEEKTNEA (136 aa)) form a disordered region. Composition is skewed to acidic residues over residues 1031–1052 (EEDE…ELQE) and 1062–1084 (DEEE…ENEG). The span at 1085–1099 (EEAKTEGLMKDDRAE) shows a compositional bias: basic and acidic residues. Residues 1100 to 1115 (SQASSLGQKVGESSEQ) are compositionally biased toward polar residues.

It belongs to the delta-EF1/ZFH-1 C2H2-type zinc-finger family. As to quaternary structure, interacts (via N-terminus) with SMARCA4/BRG1. Ubiquitinated, leading to degradation in a proteasome-dependent manner. Deubiquitinated by USP51, leading to stabilization. Colocalizes with SMARCA4/BRG1 in E-cadherin-negative cells from established lines, and stroma of normal colon as well as in de-differentiated epithelial cells at the invasion front of colorectal carcinomas (at protein level). Expressed in heart and skeletal muscle, but not in liver, spleen, or pancreas.

The protein localises to the nucleus. In terms of biological role, acts as a transcriptional repressor. Inhibits interleukin-2 (IL-2) gene expression. Enhances or represses the promoter activity of the ATP1A1 gene depending on the quantity of cDNA and on the cell type. Represses E-cadherin promoter and induces an epithelial-mesenchymal transition (EMT) by recruiting SMARCA4/BRG1. Represses BCL6 transcription in the presence of the corepressor CTBP1. Positively regulates neuronal differentiation. Represses RCOR1 transcription activation during neurogenesis. Represses transcription by binding to the E box (5'-CANNTG-3'). In the absence of TGFB1, acts as a repressor of COL1A2 transcription via binding to the E-box in the upstream enhancer region. This chain is Zinc finger E-box-binding homeobox 1, found in Homo sapiens (Human).